An 88-amino-acid chain; its full sequence is MAHKKGASSSRNGRDSAAQRLGVKRFGGQVVKAGEILVRQRGTKFHPGVNVGRGGDDTLFATSAGAVEFGVKRGRKTVNIVAVGLTAD.

This sequence belongs to the bacterial ribosomal protein bL27 family.

The chain is Large ribosomal subunit protein bL27 from Mycobacterium leprae (strain TN).